We begin with the raw amino-acid sequence, 251 residues long: 3-deoxy-manno-octulosonate cytidylyltransferase (251 aa).

It belongs to the KdsB family.

The protein resides in the cytoplasm. The catalysed reaction is 3-deoxy-alpha-D-manno-oct-2-ulosonate + CTP = CMP-3-deoxy-beta-D-manno-octulosonate + diphosphate. It participates in nucleotide-sugar biosynthesis; CMP-3-deoxy-D-manno-octulosonate biosynthesis; CMP-3-deoxy-D-manno-octulosonate from 3-deoxy-D-manno-octulosonate and CTP: step 1/1. It functions in the pathway bacterial outer membrane biogenesis; lipopolysaccharide biosynthesis. Activates KDO (a required 8-carbon sugar) for incorporation into bacterial lipopolysaccharide in Gram-negative bacteria. The chain is 3-deoxy-manno-octulosonate cytidylyltransferase from Parabacteroides distasonis (strain ATCC 8503 / DSM 20701 / CIP 104284 / JCM 5825 / NCTC 11152).